Consider the following 727-residue polypeptide: Procollagen-lysine,2-oxoglutarate 5-dioxygenase 1 (727 aa).

A signal peptide spans 1–18 (MRPLLLLAPLGWLLLAEA). N163, N197, and N538 each carry an N-linked (GlcNAc...) asparagine glycan. One can recognise a Fe2OG dioxygenase domain in the interval 636–727 (QFDLAFVVRY…RYIAVSFVDP (92 aa)). Positions 656 and 658 each coordinate Fe cation. A glycan (N-linked (GlcNAc...) asparagine) is linked at N686. H708 contacts Fe cation. Residue R718 is part of the active site.

As to quaternary structure, homodimer. Identified in a complex with P3H3 and P3H4. The cofactor is Fe(2+). Requires L-ascorbate as cofactor.

The protein localises to the rough endoplasmic reticulum membrane. It carries out the reaction L-lysyl-[collagen] + 2-oxoglutarate + O2 = (5R)-5-hydroxy-L-lysyl-[collagen] + succinate + CO2. Its function is as follows. Part of a complex composed of PLOD1, P3H3 and P3H4 that catalyzes hydroxylation of lysine residues in collagen alpha chains and is required for normal assembly and cross-linkling of collagen fibrils. Forms hydroxylysine residues in -Xaa-Lys-Gly- sequences in collagens. These hydroxylysines serve as sites of attachment for carbohydrate units and are essential for the stability of the intermolecular collagen cross-links. The protein is Procollagen-lysine,2-oxoglutarate 5-dioxygenase 1 (PLOD1) of Pongo abelii (Sumatran orangutan).